The sequence spans 513 residues: OTU domain-containing protein 5-A (513 aa).

2 disordered regions span residues 1–75 and 99–136; these read MTIL…GGAG and GPGHSKRRRQVLSAGPGATGNCPDTDDGAGNNSEDEYE. The OTU domain maps to 166–289; the sequence is FIIKQMKEDG…NIHYNSVVNP (124 aa). The cys-loop stretch occupies residues 171–177; the sequence is MKEDGAC. Asp174 is an active-site residue. The Nucleophile role is filled by Cys177. The tract at residues 226–236 is variable-loop; it reads KRKNNCHGNHI. Residues 277 to 282 are his-loop; that stretch reads YHRNIH. His282 is a catalytic residue. Positions 387–446 are disordered; that stretch reads LEEWSGRSPRQRSTAGSPEHPDLHAELCMKPPSPGAPLILGKPPSPCAPGPSNQMSTGAD.

Belongs to the peptidase C85 family.

The catalysed reaction is Thiol-dependent hydrolysis of ester, thioester, amide, peptide and isopeptide bonds formed by the C-terminal Gly of ubiquitin (a 76-residue protein attached to proteins as an intracellular targeting signal).. In terms of biological role, deubiquitinating enzyme that may function as negative regulator of the innate immune system. Has peptidase activity towards 'Lys-48'- and 'Lys-63'-linked polyubiquitin chains. Can also cleave 'Lys-11'-linked ubiquitin chains (in vitro). This Xenopus laevis (African clawed frog) protein is OTU domain-containing protein 5-A (otud5-a).